The following is an 883-amino-acid chain: Valine--tRNA ligase (883 aa).

The 'HIGH' region motif lies at 50 to 60; sequence PNVTGKLHMGH. Positions 527–531 match the 'KMSKS' region motif; it reads KMSKS. Residue K530 coordinates ATP. Residues 811–883 adopt a coiled-coil conformation; the sequence is LNELIDLDEE…KQRLEQLQRA (73 aa). A disordered region spans residues 859–883; that stretch reads QRTKRSDFEDQLTSTKQRLEQLQRA.

Belongs to the class-I aminoacyl-tRNA synthetase family. ValS type 1 subfamily. Monomer.

It is found in the cytoplasm. The enzyme catalyses tRNA(Val) + L-valine + ATP = L-valyl-tRNA(Val) + AMP + diphosphate. In terms of biological role, catalyzes the attachment of valine to tRNA(Val). As ValRS can inadvertently accommodate and process structurally similar amino acids such as threonine, to avoid such errors, it has a 'posttransfer' editing activity that hydrolyzes mischarged Thr-tRNA(Val) in a tRNA-dependent manner. In Lacticaseibacillus casei (Lactobacillus casei), this protein is Valine--tRNA ligase.